We begin with the raw amino-acid sequence, 267 residues long: MPRAFLVKKPCVSTCKRNWSELPDEERGEIYVPVSLGFCPPQPYREPEPSVAEPPSCPLALNMSLRDSSYSMAPGPCVVAQLPSEDMGHLTDPQSRDHGFLRTKMKVTLGDSPSGDLFTCRVCQKAFTYQRMLNRHMKCHNDVKRHLCTYCGKGFNDTFDLKRHVRTHTGVRPYKCSLCDKAFTQRCSLESHLKKIHGVQQKYAYKERRAKLYVCEECGCTSESQEGHVLHLKEHHPDSPLLRKTSKKVAVALQNTVTSLLQGSPHL.

C2H2-type zinc fingers lie at residues 118–140 (FTCR…MKCH), 146–168 (HLCT…VRTH), 174–197 (YKCS…KKIH), and 213–235 (YVCE…LKEH).

As to expression, expressed in fetal kidney, and also in adult pancreas and placenta. Not expressed in intestine, peripheral blood lymphocytes and ovary.

It is found in the nucleus. Functionally, putative transcription factor. Involved in hair formation and spermatogenesis. May function in the differentiation and/or maintenance of the urogenital system. The sequence is that of Putative transcription factor Ovo-like 1 (OVOL1) from Homo sapiens (Human).